The primary structure comprises 89 residues: Small ribosomal subunit protein uS15 (89 aa).

The protein belongs to the universal ribosomal protein uS15 family. In terms of assembly, part of the 30S ribosomal subunit. Forms a bridge to the 50S subunit in the 70S ribosome, contacting the 23S rRNA.

Functionally, one of the primary rRNA binding proteins, it binds directly to 16S rRNA where it helps nucleate assembly of the platform of the 30S subunit by binding and bridging several RNA helices of the 16S rRNA. In terms of biological role, forms an intersubunit bridge (bridge B4) with the 23S rRNA of the 50S subunit in the ribosome. The chain is Small ribosomal subunit protein uS15 from Azobacteroides pseudotrichonymphae genomovar. CFP2.